The sequence spans 212 residues: Glycerol-3-phosphate acyltransferase (212 aa).

6 helical membrane-spanning segments follow: residues 6-26 (IAVLIFTMGYLLGSVPFGLIL), 56-76 (LAALTLFFDIGKGALAVLLAH), 92-112 (LTLIAGAAAFLGHCYPVWLGF), 122-142 (LGVSFAAWWVAGVVFAVAWLL), 150-170 (SSVGGMVGAIAATISVMFMPA), and 171-191 (SHEIHQVYIALFSGMTILLLW).

The protein belongs to the PlsY family. In terms of assembly, probably interacts with PlsX.

Its subcellular location is the cell inner membrane. The catalysed reaction is an acyl phosphate + sn-glycerol 3-phosphate = a 1-acyl-sn-glycero-3-phosphate + phosphate. Its pathway is lipid metabolism; phospholipid metabolism. In terms of biological role, catalyzes the transfer of an acyl group from acyl-phosphate (acyl-PO(4)) to glycerol-3-phosphate (G3P) to form lysophosphatidic acid (LPA). This enzyme utilizes acyl-phosphate as fatty acyl donor, but not acyl-CoA or acyl-ACP. This chain is Glycerol-3-phosphate acyltransferase, found in Zymomonas mobilis subsp. mobilis (strain ATCC 31821 / ZM4 / CP4).